The chain runs to 960 residues: Dynamin-like GTPase OPA1, mitochondrial (960 aa).

The N-terminal 87 residues, 1–87 (MWRLRRAAVA…IKYGYQPRRN (87 aa)), are a transit peptide targeting the mitochondrion. Residues 88-96 (FWPARLATR) are Mitochondrial matrix-facing. A helical transmembrane segment spans residues 97–113 (LLKLRYLILGSAVGGGY). The Mitochondrial intermembrane portion of the chain corresponds to 114–770 (TAKKTFDQWK…NAIENMVGPD (657 aa)). A coiled-coil region spans residues 210-254 (SDKEKIDQLQEELLHTQLKYQRILERLEKENKELRKLVLQKDDKG). Lys-228 is subject to N6-acetyllysine. The Dynamin-type G domain occupies 285 to 561 (QDHLPRVVVV…FWKMVRESVE (277 aa)). The segment at 295 to 302 (GDQSAGKT) is G1 motif. 6 residues coordinate GTP: Ser-298, Gly-300, Lys-301, Thr-302, Ser-303, and Gly-317. Residue Thr-302 coordinates Mg(2+). A G2 motif region spans residues 321–324 (MMTR). Mg(2+) contacts are provided by Thr-323 and Asp-398. The tract at residues 398-401 (DLPG) is G3 motif. The segment at 467-470 (TKVD) is G4 motif. 3 residues coordinate GTP: Lys-468, Asp-470, and Thr-503. The tract at residues 501–504 (VVTG) is G5 motif. Stalk region regions lie at residues 589 to 836 (DRNE…IKDT) and 874 to 928 (CNDV…IKLL). Residues 736-856 (SDKQQWDAAI…KTALNHCNLC (121 aa)) are paddle region. Residues 771–781 (WKKRWLYWKNR) lie within the membrane without spanning it. The Mitochondrial intermembrane segment spans residues 782–960 (TQEQCVHNET…AFIEALHQEK (179 aa)). Cys-856 and Cys-874 are disulfide-bonded. Positions 895 to 960 (RQQLTNTEVR…AFIEALHQEK (66 aa)) form a coiled coil.

It belongs to the TRAFAC class dynamin-like GTPase superfamily. Dynamin/Fzo/YdjA family. Oligomeric complex consisting of membrane-bound and soluble forms of OPA1. Interacts with RCC1L; RCC1L acts as a guanine nucleotide exchange factor (GEF) for OPA1 by exchanging bound GDP for free GTP. Interacts with CHCHD3 and IMMT; these interactions occur preferentially with soluble OPA1 forms. Interacts with PRELID1. Post-translationally, cleaved by OMA1 or YME1L downstream of the transmembrane region in response to different signals to generate soluble forms. Cleaved by OMA1 at position S1 following stress conditions, generating the short soluble form (Dynamin-like GTPase OPA1, short form; S-OPA1). AFG3L2 is involved in the regulation of OMA1-dependent processing of OPA1. PARL-dependent proteolytic processing releases an antiapoptotic soluble form not required for mitochondrial fusion.

It is found in the mitochondrion inner membrane. It localises to the mitochondrion intermembrane space. The enzyme catalyses GTP + H2O = GDP + phosphate + H(+). Its activity is regulated as follows. Activated by guanine nucleotide exchange factor RCC1L. Dynamin-related GTPase that is essential for normal mitochondrial morphology by mediating fusion of the mitochondrial inner membranes, regulating cristae morphology and maintaining respiratory chain function. Exists in two forms: the transmembrane, long form (Dynamin-like GTPase OPA1, long form; L-OPA1), which is tethered to the inner mitochondrial membrane, and the short soluble form (Dynamin-like GTPase OPA1, short form; S-OPA1), which results from proteolytic cleavage and localizes in the intermembrane space. Both forms (L-OPA1 and S-OPA1) cooperate to catalyze the fusion of the mitochondrial inner membrane. The equilibrium between L-OPA1 and S-OPA1 is essential: excess levels of S-OPA1, produced by cleavage by OMA1 following loss of mitochondrial membrane potential, lead to an impaired equilibrium between L-OPA1 and S-OPA1, inhibiting mitochondrial fusion. The balance between L-OPA1 and S-OPA1 also influences cristae shape and morphology. Involved in remodeling cristae and the release of cytochrome c during apoptosis. Proteolytic processing by PARL in response to intrinsic apoptotic signals may lead to disassembly of OPA1 oligomers and release of the caspase activator cytochrome C (CYCS) into the mitochondrial intermembrane space. Acts as a regulator of T-helper Th17 cells, which are characterized by cells with fused mitochondria with tight cristae, by mediating mitochondrial membrane remodeling: OPA1 is required for interleukin-17 (IL-17) production. Its role in mitochondrial morphology is required for mitochondrial genome maintenance. In terms of biological role, constitutes the transmembrane long form (L-OPA1) that plays a central role in mitochondrial inner membrane fusion and cristae morphology. L-OPA1 and the soluble short form (S-OPA1) form higher-order helical assemblies that coordinate the fusion of mitochondrial inner membranes. Inner membrane-anchored L-OPA1 molecules initiate membrane remodeling by recruiting soluble S-OPA1 to rapidly polymerize into a flexible cylindrical scaffold encaging the mitochondrial inner membrane. Once at the membrane surface, the formation of S-OPA1 helices induce bilayer curvature. OPA1 dimerization through the paddle region, which inserts into cardiolipin-containing membrane, promotes GTP hydrolysis and the helical assembly of a flexible OPA1 lattice on the membrane, which drives membrane curvature and mitochondrial fusion. Plays a role in the maintenance and remodeling of mitochondrial cristae, some invaginations of the mitochondrial inner membrane that provide an increase in the surface area. Probably acts by forming helical filaments at the inside of inner membrane tubes with the shape and dimensions of crista junctions. The equilibrium between L-OPA1 and S-OPA1 influences cristae shape and morphology: increased L-OPA1 levels promote cristae stacking and elongated mitochondria, while increased S-OPA1 levels correlated with irregular cristae packing and round mitochondria shape. Its function is as follows. Constitutes the soluble short form (S-OPA1) generated by cleavage by OMA1, which plays a central role in mitochondrial inner membrane fusion and cristae morphology. The transmembrane long form (L-OPA1) and the S-OPA1 form higher-order helical assemblies that coordinate the fusion of mitochondrial inner membranes. Inner membrane-anchored L-OPA1 molecules initiate membrane remodeling by recruiting soluble S-OPA1 to rapidly polymerize into a flexible cylindrical scaffold encaging the mitochondrial inner membrane. Once at the membrane surface, the formation of S-OPA1 helices induce bilayer curvature. OPA1 dimerization through the paddle region, which inserts into cardiolipin-containing membrane, promotes GTP hydrolysis and the helical assembly of a flexible OPA1 lattice on the membrane, which drives membrane curvature and mitochondrial fusion. Excess levels of S-OPA1 produced by cleavage by OMA1 following stress conditions that induce loss of mitochondrial membrane potential, lead to an impaired equilibrium between L-OPA1 and S-OPA1, thereby inhibiting mitochondrial fusion. Involved in mitochondrial safeguard in response to transient mitochondrial membrane depolarization by mediating flickering: cleavage by OMA1 leads to excess production of S-OPA1, preventing mitochondrial hyperfusion. Plays a role in the maintenance and remodeling of mitochondrial cristae, some invaginations of the mitochondrial inner membrane that provide an increase in the surface area. Probably acts by forming helical filaments at the inside of inner membrane tubes with the shape and dimensions of crista junctions. The equilibrium between L-OPA1 and S-OPA1 influences cristae shape and morphology: increased L-OPA1 levels promote cristae stacking and elongated mitochondria, while increased S-OPA1 levels correlated with irregular cristae packing and round mitochondria shape. The polypeptide is Dynamin-like GTPase OPA1, mitochondrial (Pongo abelii (Sumatran orangutan)).